The following is a 38-amino-acid chain: Photosystem II reaction center protein X (38 aa).

The helical transmembrane segment at 9-29 (IASLTAGALVLSAIGIALIII) threads the bilayer.

The protein belongs to the PsbX family. Type 1 subfamily. As to quaternary structure, PSII is composed of 1 copy each of membrane proteins PsbA, PsbB, PsbC, PsbD, PsbE, PsbF, PsbH, PsbI, PsbJ, PsbK, PsbL, PsbM, PsbT, PsbX, PsbY, PsbZ, Psb30/Ycf12, at least 3 peripheral proteins of the oxygen-evolving complex and a large number of cofactors. It forms dimeric complexes.

Its subcellular location is the plastid. It localises to the chloroplast thylakoid membrane. Involved in the binding and/or turnover of quinones at the Q(B) site of photosystem II (PSII). PSII is a light-driven water plastoquinone oxidoreductase, using light energy to abstract electrons from H(2)O, generating a proton gradient subsequently used for ATP formation. The chain is Photosystem II reaction center protein X from Thalassiosira pseudonana (Marine diatom).